A 413-amino-acid polypeptide reads, in one-letter code: 2,3-bisphosphoglycerate-independent phosphoglycerate mutase (413 aa).

It belongs to the BPG-independent phosphoglycerate mutase family. A-PGAM subfamily.

The catalysed reaction is (2R)-2-phosphoglycerate = (2R)-3-phosphoglycerate. It functions in the pathway carbohydrate degradation; glycolysis; pyruvate from D-glyceraldehyde 3-phosphate: step 3/5. Its function is as follows. Catalyzes the interconversion of 2-phosphoglycerate and 3-phosphoglycerate. In Metallosphaera sedula (strain ATCC 51363 / DSM 5348 / JCM 9185 / NBRC 15509 / TH2), this protein is 2,3-bisphosphoglycerate-independent phosphoglycerate mutase.